We begin with the raw amino-acid sequence, 200 residues long: dITP/XTP pyrophosphatase (200 aa).

8 to 13 (TGNQGK) contributes to the substrate binding site. D69 acts as the Proton acceptor in catalysis. D69 is a Mg(2+) binding site. Substrate-binding positions include S70, 154-157 (FGYD), K177, and 182-183 (HR).

This sequence belongs to the HAM1 NTPase family. In terms of assembly, homodimer. The cofactor is Mg(2+).

It catalyses the reaction XTP + H2O = XMP + diphosphate + H(+). The enzyme catalyses dITP + H2O = dIMP + diphosphate + H(+). The catalysed reaction is ITP + H2O = IMP + diphosphate + H(+). Its function is as follows. Pyrophosphatase that catalyzes the hydrolysis of nucleoside triphosphates to their monophosphate derivatives, with a high preference for the non-canonical purine nucleotides XTP (xanthosine triphosphate), dITP (deoxyinosine triphosphate) and ITP. Seems to function as a house-cleaning enzyme that removes non-canonical purine nucleotides from the nucleotide pool, thus preventing their incorporation into DNA/RNA and avoiding chromosomal lesions. The polypeptide is dITP/XTP pyrophosphatase (Vibrio parahaemolyticus serotype O3:K6 (strain RIMD 2210633)).